The primary structure comprises 546 residues: uncharacterized protein (546 aa).

Helical transmembrane passes span 27-46 (EALV…PFVF), 59-78 (NGLI…ALVT), 83-100 (FALI…YAIL), 114-134 (SVLF…AYAA), 143-163 (PLII…IPIF), 176-196 (MLYS…ALGI), 204-224 (VIAV…VFTA), 237-257 (LSSA…FGVF), and 268-288 (MIWI…LIGW).

It localises to the cell membrane. This is an uncharacterized protein from Bacillus subtilis (strain 168).